The sequence spans 201 residues: Small ribosomal subunit protein uS4c (201 aa).

The tract at residues 15-44 (LGALPGLTSKRPKTGNDLKNQSRSGKKSQY) is disordered. Residues 89–150 (MRLDNILFRL…EKKSRTLIQN (62 aa)) enclose the S4 RNA-binding domain.

The protein belongs to the universal ribosomal protein uS4 family. As to quaternary structure, part of the 30S ribosomal subunit. Contacts protein S5. The interaction surface between S4 and S5 is involved in control of translational fidelity.

The protein resides in the plastid. It localises to the chloroplast. Functionally, one of the primary rRNA binding proteins, it binds directly to 16S rRNA where it nucleates assembly of the body of the 30S subunit. In terms of biological role, with S5 and S12 plays an important role in translational accuracy. The chain is Small ribosomal subunit protein uS4c (rps4) from Cucumis sativus (Cucumber).